We begin with the raw amino-acid sequence, 131 residues long: Fluoride-specific ion channel FluC (131 aa).

3 consecutive transmembrane segments (helical) span residues 3-23 (AAAN…GAWL), 34-54 (IFLT…LLMG), and 62-82 (AVPA…LGGL). Na(+) is bound by residues Gly-80 and Thr-83. A helical membrane pass occupies residues 101-121 (WGWLALHAAVHVAGSLLMAWI).

It belongs to the fluoride channel Fluc/FEX (TC 1.A.43) family.

It localises to the cell inner membrane. The enzyme catalyses fluoride(in) = fluoride(out). Its activity is regulated as follows. Na(+) is not transported, but it plays an essential structural role and its presence is essential for fluoride channel function. Fluoride-specific ion channel. Important for reducing fluoride concentration in the cell, thus reducing its toxicity. The sequence is that of Fluoride-specific ion channel FluC from Aromatoleum aromaticum (strain DSM 19018 / LMG 30748 / EbN1) (Azoarcus sp. (strain EbN1)).